The chain runs to 212 residues: Actin-depolymerizing factor 1, isoforms a/b (212 aa).

The 157-residue stretch at 3 to 159 (SGVMVDPDVQ…SHKELLNNCP (157 aa)) folds into the ADF-H domain.

Belongs to the actin-binding proteins ADF family. Interacts with F-actin.

Its function is as follows. Depolymerizes growing actin filaments in muscle cells; required for the assembly of actin filaments into the functional contractile myofilament lattice of muscle. Competes with unc-87 for actin binding and inhibits the actin-bundling activity of unc-87. This Caenorhabditis elegans protein is Actin-depolymerizing factor 1, isoforms a/b.